A 293-amino-acid polypeptide reads, in one-letter code: Formamidopyrimidine-DNA glycosylase (293 aa).

The Schiff-base intermediate with DNA role is filled by proline 2. The Proton donor role is filled by glutamate 3. The active-site Proton donor; for beta-elimination activity is lysine 60. DNA is bound by residues histidine 110, arginine 129, and lysine 174. The segment at 259–293 (NVYRRTGKKCHACKNLIERQKISGRSTHWCRKCQK) adopts an FPG-type zinc-finger fold. The Proton donor; for delta-elimination activity role is filled by arginine 283.

The protein belongs to the FPG family. As to quaternary structure, monomer. The cofactor is Zn(2+).

The catalysed reaction is Hydrolysis of DNA containing ring-opened 7-methylguanine residues, releasing 2,6-diamino-4-hydroxy-5-(N-methyl)formamidopyrimidine.. It catalyses the reaction 2'-deoxyribonucleotide-(2'-deoxyribose 5'-phosphate)-2'-deoxyribonucleotide-DNA = a 3'-end 2'-deoxyribonucleotide-(2,3-dehydro-2,3-deoxyribose 5'-phosphate)-DNA + a 5'-end 5'-phospho-2'-deoxyribonucleoside-DNA + H(+). Functionally, involved in base excision repair of DNA damaged by oxidation or by mutagenic agents. Acts as a DNA glycosylase that recognizes and removes damaged bases. Has a preference for oxidized purines, such as 7,8-dihydro-8-oxoguanine (8-oxoG). Has AP (apurinic/apyrimidinic) lyase activity and introduces nicks in the DNA strand. Cleaves the DNA backbone by beta-delta elimination to generate a single-strand break at the site of the removed base with both 3'- and 5'-phosphates. The polypeptide is Formamidopyrimidine-DNA glycosylase (Prochlorococcus marinus (strain MIT 9515)).